We begin with the raw amino-acid sequence, 828 residues long: Periplasmic nitrate reductase (828 aa).

Positions 1 to 32 (MNLSRRDFMKTNAAVAAAAVAGLAIPVKNVEA) form a signal peptide, tat-type signal. The region spanning 38–94 (IKWDKAPCRFCGTGCSVLVGTQNGRVVASQGDPDADVNRGLNCIKGYFLPKIMYGKD) is the 4Fe-4S Mo/W bis-MGD-type domain. Residues Cys-45, Cys-48, Cys-52, and Cys-80 each coordinate [4Fe-4S] cluster. Mo-bis(molybdopterin guanine dinucleotide) contacts are provided by residues Lys-82, Gln-149, Asn-174, Cys-178, 211 to 218 (WGSNMAEM), 242 to 246 (STFEH), 261 to 263 (QSD), Met-372, Gln-376, Asn-482, 508 to 509 (SD), Lys-531, Asp-558, and 718 to 727 (TGRVLEHWHT). Phe-794 is a binding site for substrate. The Mo-bis(molybdopterin guanine dinucleotide) site is built by Asn-802 and Lys-819.

This sequence belongs to the prokaryotic molybdopterin-containing oxidoreductase family. NasA/NapA/NarB subfamily. As to quaternary structure, component of the periplasmic nitrate reductase NapAB complex composed of NapA and NapB. [4Fe-4S] cluster serves as cofactor. The cofactor is Mo-bis(molybdopterin guanine dinucleotide). Predicted to be exported by the Tat system. The position of the signal peptide cleavage has not been experimentally proven.

The protein resides in the periplasm. It carries out the reaction 2 Fe(II)-[cytochrome] + nitrate + 2 H(+) = 2 Fe(III)-[cytochrome] + nitrite + H2O. Its function is as follows. Catalytic subunit of the periplasmic nitrate reductase complex NapAB. Receives electrons from NapB and catalyzes the reduction of nitrate to nitrite. The chain is Periplasmic nitrate reductase from Pasteurella multocida (strain Pm70).